The following is a 732-amino-acid chain: 1,4-alpha-glucan branching enzyme GlgB 1 (732 aa).

Aspartate 411 acts as the Nucleophile in catalysis. Glutamate 464 functions as the Proton donor in the catalytic mechanism.

Belongs to the glycosyl hydrolase 13 family. GlgB subfamily. In terms of assembly, monomer.

It carries out the reaction Transfers a segment of a (1-&gt;4)-alpha-D-glucan chain to a primary hydroxy group in a similar glucan chain.. It participates in glycan biosynthesis; glycogen biosynthesis. Functionally, catalyzes the formation of the alpha-1,6-glucosidic linkages in glycogen by scission of a 1,4-alpha-linked oligosaccharide from growing alpha-1,4-glucan chains and the subsequent attachment of the oligosaccharide to the alpha-1,6 position. This chain is 1,4-alpha-glucan branching enzyme GlgB 1, found in Xanthomonas euvesicatoria pv. vesicatoria (strain 85-10) (Xanthomonas campestris pv. vesicatoria).